Here is a 267-residue protein sequence, read N- to C-terminus: GTP cyclohydrolase FolE2 (267 aa).

Belongs to the GTP cyclohydrolase IV family.

It catalyses the reaction GTP + H2O = 7,8-dihydroneopterin 3'-triphosphate + formate + H(+). It participates in cofactor biosynthesis; 7,8-dihydroneopterin triphosphate biosynthesis; 7,8-dihydroneopterin triphosphate from GTP: step 1/1. Converts GTP to 7,8-dihydroneopterin triphosphate. The sequence is that of GTP cyclohydrolase FolE2 from Nitrosococcus oceani (strain ATCC 19707 / BCRC 17464 / JCM 30415 / NCIMB 11848 / C-107).